A 142-amino-acid chain; its full sequence is Large ribosomal subunit protein uL11 (142 aa).

This sequence belongs to the universal ribosomal protein uL11 family. In terms of assembly, part of the ribosomal stalk of the 50S ribosomal subunit. Interacts with L10 and the large rRNA to form the base of the stalk. L10 forms an elongated spine to which L12 dimers bind in a sequential fashion forming a multimeric L10(L12)X complex. Post-translationally, one or more lysine residues are methylated.

Forms part of the ribosomal stalk which helps the ribosome interact with GTP-bound translation factors. This Sinorhizobium fredii (strain NBRC 101917 / NGR234) protein is Large ribosomal subunit protein uL11.